The chain runs to 403 residues: Double C2-like domain-containing protein alpha (403 aa).

Residues 1–92 (MRGRRGDRMT…DSYDSDDTTA (92 aa)) are interaction with UNC13D and DYNLT1. C2 domains lie at 92 to 214 (ALGT…HFNI) and 254 to 387 (ERGR…ERWH). 9 residues coordinate Ca(2+): Asp123, Asp129, Asp184, Asp186, Asp285, Asp291, Asp345, Asp347, and Asp353. Residues 218-403 (RQVPLPSPSS…PPAAGALPLA (186 aa)) form an interaction with UNC13D region.

As to quaternary structure, interacts (via N-terminus) with UNC13A. Interacts with cytoplasmic dynein light chain DYNLT1. Interacts with UNC13D. It depends on Ca(2+) as a cofactor. In terms of tissue distribution, predominantly expressed in brain. Also found in non-neural tissues. Expressed in RBL-2H3 mast cell line.

Its subcellular location is the cytoplasmic vesicle. It is found in the secretory vesicle. It localises to the synaptic vesicle membrane. The protein localises to the synapse. The protein resides in the synaptosome. Its subcellular location is the lysosome. Its function is as follows. Calcium sensor which most probably regulates fusion of vesicles with membranes. Binds calcium and phospholipids. May be involved in calcium dependent neurotransmitter release through the interaction with UNC13A. May be involved in calcium-dependent spontaneous release of neurotransmitter in absence of action potentials in neuronal cells. Regulates Ca(2+)-dependent secretory lysosome exocytosis in mast cells. The protein is Double C2-like domain-containing protein alpha (Doc2a) of Rattus norvegicus (Rat).